The primary structure comprises 196 residues: MNGKQCFCFFLFHLFYTGLFACGKPESSLAPEYFDLAHAYVQLHRYDEARDYYMRAARDPAYYHAAQYNFARVCGLQNDWKTAVHALQPLYDADSANATIAAAYAYALLSFGETARALLLYQQLYERDQKNTQRILEYANVLVHAKKYIQAVEFLRQKKSLLSEAEDVRVLQSIVRKLKDSVPPHLIADFVSTDDL.

The N-terminal stretch at 1 to 21 (MNGKQCFCFFLFHLFYTGLFA) is a signal peptide. The N-palmitoyl cysteine moiety is linked to residue cysteine 22. Cysteine 22 carries the S-diacylglycerol cysteine lipid modification.

It localises to the cell membrane. This is an uncharacterized protein from Treponema pallidum (strain Nichols).